We begin with the raw amino-acid sequence, 489 residues long: Rhamnulokinase (489 aa).

An ATP-binding site is contributed by 13 to 17 (ASSGR). A disulfide bond links C68 and C222. Residues G83 and 236–238 (HDT) contribute to the substrate site. Catalysis depends on D237, which acts as the Proton acceptor. T259 contacts ATP. Residue N296 coordinates substrate. Position 304 (Q304) interacts with ATP. An intrachain disulfide couples C353 to C370. G402 lines the ATP pocket. The cysteines at positions 413 and 417 are disulfide-linked.

This sequence belongs to the rhamnulokinase family. Monomer. Requires Mg(2+) as cofactor.

It carries out the reaction L-rhamnulose + ATP = L-rhamnulose 1-phosphate + ADP + H(+). Its pathway is carbohydrate degradation; L-rhamnose degradation; glycerone phosphate from L-rhamnose: step 2/3. Its function is as follows. Involved in the catabolism of L-rhamnose (6-deoxy-L-mannose). Catalyzes the transfer of the gamma-phosphate group from ATP to the 1-hydroxyl group of L-rhamnulose to yield L-rhamnulose 1-phosphate. The polypeptide is Rhamnulokinase (Escherichia coli O17:K52:H18 (strain UMN026 / ExPEC)).